Reading from the N-terminus, the 139-residue chain is Non-structural protein 1 (139 aa).

The DLNP; interaction with MAP1B signature appears at 136–139 (DLNS).

The protein belongs to the pneumovirus non-structural protein 1 family. Monomer. Homomultimer. Heteromultimer with NS2. Interacts with the matrix protein M. Interacts with host ELOC and CUL2; this interaction allows NS1 to form an active E3 ligase with ELOC and CUL2. Interacts with host IRF3; this interaction leads to the disrupted association of IRF3 with CREBBP and thus reduced binding of IRF3 to the IFN-beta promoter. Interacts with host MAVS; this interaction prevents MAVS binding to RIGI and inhibits signaling pathway leading to interferon production. Interacts with host MAP1B/microtubule-associated protein 1B. Interacts with host TRIM25 (via SPRY domain); this interaction suppresses RIGI ubiquitination and results in decreased interaction between RIGI and MAVS.

It localises to the host cytoplasm. The protein resides in the host mitochondrion. Its subcellular location is the host nucleus. In terms of biological role, plays a major role in antagonizing the type I IFN-mediated antiviral response by degrading or inhibiting multiple cellular factors required for either IFN induction or response pathways. Acts cooperatively with NS2 to repress activation and nuclear translocation of host IFN-regulatory factor IRF3. Also disrupts the association of IRF3 with CREBBP. Interacts with host mitochondrial-associated membrane (MAM) MAVS and prevents the interaction with RIGI. Interacts with TRIM25 to suppress TRIM25-mediated RIGI ubiquitination and thereby RIGI-MAVS interaction. Together with NS2, participates in the proteasomal degradation of host STAT2, IRF3, IRF7, TBK1 and RIGI through a NS-degradasome involving CUL2 and Elongin-C. The degradasome requires an intact mitochondrial MAVS. Decreases the levels of host TRAF3 and IKBKE/IKK-epsilon. As functions other than disruptions of the type I IFN-mediated antiviral signaling pathways, induces host SOCS1 and SOCS3 expression. Suppresses premature apoptosis by an NF-kappa-B-dependent, interferon-independent mechanism and thus facilitates virus growth. Additionally, NS1 may serve some inhibitory role in viral transcription and RNA replication. Suppresses proliferation and activation of host CD103+ CD8+ cytotoxic T-lymphocytes and Th17 helper T-lymphocytes. This is Non-structural protein 1 (1C) from Homo sapiens (Human).